A 98-amino-acid chain; its full sequence is uncharacterized protein (98 aa).

Belongs to the IS150/IS1296 orfA family.

This is an uncharacterized protein from Haemophilus influenzae (strain ATCC 51907 / DSM 11121 / KW20 / Rd).